A 506-amino-acid chain; its full sequence is MFSLQDICRKHLFLLPSSFDEYILQALGLYWEKHGSLQRIRKDAVFVQRNIVLSTNEALRIAASEGNERVIKLLLSWEGDFHYVIIGALEGDRYDLIHKYVSQIKDYHNILSLIQNANTFEKCHHLSNSNMWCLIQNAIKYNMLSILQKHKNCLTHEGENQELFEMACEEQKYDIVLWIGQTLMVNEPESIFDTALARIDFSLLTIGYRLLFDNKMSCIDIHDEEDLTSSLTEHLEKAAIKGCFFFMLETLKHGGNVNMAVLSKAVEYNHRKILDYFIRRQKCLSREEIEKLLLSGISNGASIKTLNLLLSYLNYSVKHIIRKIVQYVIKEGDFTIIVVLKRKKINLVEPVLSGFMDDYYSYCFIKQFIDEFDIRPEKIIKMAARKGKLNMIIEFFNEIYPHKDDLKTMFKFLKNLVYTMKHKKGKEVLIGLIHKIYQSIHLENKEMFNLLKFYVMYNANIQFIALCKDCFKLAGFKPFLLECLDIAIKRNYPDIIQNIKLLLKYE.

The protein belongs to the asfivirus MGF 505 family.

Plays a role in virus cell tropism, and may be required for efficient virus replication in macrophages. The sequence is that of Protein MGF 505-4R from Ornithodoros (relapsing fever ticks).